The chain runs to 194 residues: Ribosome maturation factor RimP (194 aa).

Belongs to the RimP family.

Its subcellular location is the cytoplasm. In terms of biological role, required for maturation of 30S ribosomal subunits. In Jannaschia sp. (strain CCS1), this protein is Ribosome maturation factor RimP.